Consider the following 579-residue polypeptide: MKDFSDVILCMEATESSKTEFCNPAFEPESGPPCPPPVFPEDASYSVPAPWHGRRPRGLRPDCRFSWLCVLLLSSLLLLLLGLLVAIILAQLQAAPPSGASHSPLPAGGLTTTTTTPTITTSQAAGTPKGQQESGVSPSPQSTCGGLLSGPRGFFSSPNYPDPYPPNTHCVWHIQVATDHAIQLKIEALSIESVASCLFDRLELSPEPEGPLLRVCGRVPPPTLNTNASHLLVVFVSDSSVEGFGFHAWYQAMAPGRGSCAHDEFRCDQLICLLPDSVCDGFANCADGSDETNCSAKFSGCGGNLTGLQGTFSTPSYLQQYPHQLLCTWHISVPAGHSIELQFHNFSLEAQDECKFDYVEVYETSSSGAFSLLGRFCGAEPPPHLVSSHHELAVLFRTDHGISSGGFSATYLAFNATENPCGPSELSCQAGGCKGVQWMCDMWRDCTDGSDDNCSGPLFPPPELACEPVQVEMCLGLSYNTTAFPNIWVGMITQEEVVEVLSGYKSLTSLPCYQHFRRLLCGLLVPRCTPLGSVLPPCRSVCQEAEHQCQSGLALLGTPWPFNCNRLPEAADLEACAQP.

Over 1–69 (MKDFSDVILC…RPDCRFSWLC (69 aa)) the chain is Cytoplasmic. Residues 70-90 (VLLLSSLLLLLLGLLVAIILA) form a helical; Signal-anchor for type II membrane protein membrane-spanning segment. Residues 91-579 (QLQAAPPSGA…AADLEACAQP (489 aa)) lie on the Extracellular side of the membrane. The segment at 100–143 (ASHSPLPAGGLTTTTTTPTITTSQAAGTPKGQQESGVSPSPQST) is disordered. Residues 111 to 121 (TTTTTTPTITT) are compositionally biased toward low complexity. A compositionally biased stretch (polar residues) spans 122–143 (SQAAGTPKGQQESGVSPSPQST). Intrachain disulfides connect cysteine 144-cysteine 170 and cysteine 197-cysteine 216. Positions 144 to 253 (CGGLLSGPRG…FGFHAWYQAM (110 aa)) constitute a CUB 1 domain. Asparagine 227 carries an N-linked (GlcNAc...) asparagine glycan. Residues 259–295 (SCAHDEFRCDQLICLLPDSVCDGFANCADGSDETNCS) form the LDL-receptor class A 1 domain. 5 cysteine pairs are disulfide-bonded: cysteine 260/cysteine 272, cysteine 267/cysteine 285, cysteine 279/cysteine 294, cysteine 301/cysteine 327, and cysteine 354/cysteine 377. One can recognise a CUB 2 domain in the interval 301–414 (CGGNLTGLQG…GGFSATYLAF (114 aa)). An N-linked (GlcNAc...) asparagine glycan is attached at asparagine 415. The region spanning 420 to 455 (PCGPSELSCQAGGCKGVQWMCDMWRDCTDGSDDNCS) is the LDL-receptor class A 2 domain. Disulfide bonds link cysteine 421-cysteine 433, cysteine 428-cysteine 446, cysteine 440-cysteine 454, cysteine 466-cysteine 528, cysteine 474-cysteine 521, cysteine 512-cysteine 549, cysteine 538-cysteine 576, and cysteine 542-cysteine 564. The FZ domain maps to 461–579 (PPELACEPVQ…AADLEACAQP (119 aa)).

In terms of assembly, interacts with C1QTNF5. Specifically expressed in brain. Strongly expressed in medulla oblongata and to a lower extent in hippocampus and corpus callosum. Expressed in keratinocytes.

It is found in the apical cell membrane. Functionally, may play a role in eye development. The chain is Membrane frizzled-related protein (MFRP) from Homo sapiens (Human).